The primary structure comprises 330 residues: Peroxidase 70 (330 aa).

The signal sequence occupies residues 1–24 (MRSFTNLNPCYVLLPFFLVLATNA). 4 disulfides stabilise this stretch: Cys43/Cys119, Cys76/Cys81, Cys125/Cys326, and Cys202/Cys234. His74 functions as the Proton acceptor in the catalytic mechanism. Residues Asp75, Val78, Gly80, Asp82, and Ser84 each coordinate Ca(2+). Pro165 contributes to the substrate binding site. Residue His195 coordinates heme b. Ca(2+) is bound at residue Thr196. Ca(2+) contacts are provided by Asp247, Ser250, and Asp255.

It belongs to the peroxidase family. Classical plant (class III) peroxidase subfamily. Requires heme b as cofactor. It depends on Ca(2+) as a cofactor.

It localises to the secreted. It carries out the reaction 2 a phenolic donor + H2O2 = 2 a phenolic radical donor + 2 H2O. In terms of biological role, removal of H(2)O(2), oxidation of toxic reductants, biosynthesis and degradation of lignin, suberization, auxin catabolism, response to environmental stresses such as wounding, pathogen attack and oxidative stress. These functions might be dependent on each isozyme/isoform in each plant tissue. This is Peroxidase 70 (PER70) from Arabidopsis thaliana (Mouse-ear cress).